Reading from the N-terminus, the 371-residue chain is MPHQQILILFGLLPVATNISTWWNFGSMLLACSSMQVLTGFFLAVHYTANINLAFSSIVHITRDVPYGWLMQNLHAIGASMFFICIYTHIARGLYYGSYLNKKTWLSGTTLLIMLMATAFFGYVLPWGQMSFWAATVITNLLTAIPYLGTTMTTWLWGGFAINDPTLTRFFALHFILPFGIISLSSLHIMLLHEDGSSNPLGTNSDIDKIPFHPYHTYKDMLMLSLMVLALLTTVAFFPDIFNDPENFSKANPLVTPQHIKPEWYFLFAYGILRSIPNKLGGALALVMSIMILLTTPFTHTSTIRSMTFRPIMQFMFWTLVATFTVITWAATKPVEPPFTAISQAASTMYFMFFITNPIVGWFENKIMKYN.

The next 4 membrane-spanning stretches (helical) occupy residues 25 to 45, 69 to 90, 105 to 125, and 170 to 190; these read FGSMLLACSSMQVLTGFFLAV, WLMQNLHAIGASMFFICIYTHI, WLSGTTLLIMLMATAFFGYVL, and FFALHFILPFGIISLSSLHIM. Positions 75 and 89 each coordinate heme b. Heme b-binding residues include His174 and His188. Position 193 (His193) interacts with a ubiquinone. 4 helical membrane passes run 218–238, 280–300, 312–332, and 339–358; these read YKDMLMLSLMVLALLTTVAFF, LGGALALVMSIMILLTTPFTH, IMQFMFWTLVATFTVITWAAT, and FTAISQAASTMYFMFFITNP.

The protein belongs to the cytochrome b family. The cytochrome bc1 complex contains 3 respiratory subunits (MT-CYB, CYC1 and UQCRFS1), 2 core proteins (UQCRC1 and UQCRC2) and probably 6 low-molecular weight proteins. It depends on heme b as a cofactor.

The protein resides in the mitochondrion inner membrane. Functionally, component of the ubiquinol-cytochrome c reductase complex (complex III or cytochrome b-c1 complex) that is part of the mitochondrial respiratory chain. The b-c1 complex mediates electron transfer from ubiquinol to cytochrome c. Contributes to the generation of a proton gradient across the mitochondrial membrane that is then used for ATP synthesis. This chain is Cytochrome b (MT-CYB), found in Eryx colubrinus loveridgei.